We begin with the raw amino-acid sequence, 103 residues long: Acyl carrier protein (103 aa).

The 76-residue stretch at 14–89 folds into the Carrier domain; that stretch reads NIVSNIVQDI…EFIDFTLQTI (76 aa). Serine 49 bears the O-(pantetheine 4'-phosphoryl)serine mark.

This sequence belongs to the acyl carrier protein (ACP) family. 4'-phosphopantetheine is transferred from CoA to a specific serine of apo-ACP by AcpS. This modification is essential for activity because fatty acids are bound in thioester linkage to the sulfhydryl of the prosthetic group.

The protein localises to the plastid. The protein resides in the cyanelle. It functions in the pathway lipid metabolism; fatty acid biosynthesis. Functionally, carrier of the growing fatty acid chain in fatty acid biosynthesis. This Cyanophora paradoxa protein is Acyl carrier protein.